The primary structure comprises 867 residues: 2-methylcitrate dehydratase (2-methyl-trans-aconitate forming) (867 aa).

Residues Cys-410, Cys-476, and Cys-479 each contribute to the [4Fe-4S] cluster site.

It belongs to the aconitase/IPM isomerase family. [4Fe-4S] cluster is required as a cofactor.

It carries out the reaction (2S,3S)-2-methylcitrate = 2-methyl-trans-aconitate + H2O. The enzyme catalyses citrate = D-threo-isocitrate. The protein operates within organic acid metabolism; propanoate degradation. Inhibited by ferricyanide and EDTA. Involved in the catabolism of short chain fatty acids (SCFA) via the 2-methylcitrate cycle II (propionate degradation route). In vivo under anaerobic conditions, AcnD catalyzes the stereospecific dehydration of (2S,3S)-methylcitrate (2-MC) to yield the trans isomer of 2-methyl-aconitate (2-MCA). AcnD can also accept citrate and cis-aconitate, but with a lower efficiency. 2-methylisocitrate and isocitrate are not substrates. The polypeptide is 2-methylcitrate dehydratase (2-methyl-trans-aconitate forming) (acnD) (Shewanella oneidensis (strain ATCC 700550 / JCM 31522 / CIP 106686 / LMG 19005 / NCIMB 14063 / MR-1)).